The primary structure comprises 372 residues: Queuine tRNA-ribosyltransferase (372 aa).

The active-site Proton acceptor is D92. Substrate-binding positions include 92-96 (DSGGY), D146, Q188, and G215. Residues 246–252 (GIGSLKE) form an RNA binding region. D265 functions as the Nucleophile in the catalytic mechanism. An RNA binding; important for wobble base 34 recognition region spans residues 270–274 (TRLGR). Zn(2+) is bound by residues C303, C305, C308, and H334.

The protein belongs to the queuine tRNA-ribosyltransferase family. Homodimer. Within each dimer, one monomer is responsible for RNA recognition and catalysis, while the other monomer binds to the replacement base PreQ1. It depends on Zn(2+) as a cofactor.

The enzyme catalyses 7-aminomethyl-7-carbaguanine + guanosine(34) in tRNA = 7-aminomethyl-7-carbaguanosine(34) in tRNA + guanine. Its pathway is tRNA modification; tRNA-queuosine biosynthesis. Functionally, catalyzes the base-exchange of a guanine (G) residue with the queuine precursor 7-aminomethyl-7-deazaguanine (PreQ1) at position 34 (anticodon wobble position) in tRNAs with GU(N) anticodons (tRNA-Asp, -Asn, -His and -Tyr). Catalysis occurs through a double-displacement mechanism. The nucleophile active site attacks the C1' of nucleotide 34 to detach the guanine base from the RNA, forming a covalent enzyme-RNA intermediate. The proton acceptor active site deprotonates the incoming PreQ1, allowing a nucleophilic attack on the C1' of the ribose to form the product. After dissociation, two additional enzymatic reactions on the tRNA convert PreQ1 to queuine (Q), resulting in the hypermodified nucleoside queuosine (7-(((4,5-cis-dihydroxy-2-cyclopenten-1-yl)amino)methyl)-7-deazaguanosine). The polypeptide is Queuine tRNA-ribosyltransferase (Prochlorococcus marinus (strain MIT 9515)).